Here is a 167-residue protein sequence, read N- to C-terminus: Small ribosomal subunit protein uS5 (167 aa).

In terms of domain architecture, S5 DRBM spans 12-75; that stretch reads LEERVVTINR…EDAKKNMVFV (64 aa).

It belongs to the universal ribosomal protein uS5 family. As to quaternary structure, part of the 30S ribosomal subunit. Contacts proteins S4 and S8.

In terms of biological role, with S4 and S12 plays an important role in translational accuracy. Functionally, located at the back of the 30S subunit body where it stabilizes the conformation of the head with respect to the body. The polypeptide is Small ribosomal subunit protein uS5 (Listeria innocua serovar 6a (strain ATCC BAA-680 / CLIP 11262)).